The sequence spans 793 residues: Pentatricopeptide repeat-containing protein At1g03100, mitochondrial (793 aa).

The N-terminal 87 residues, 1 to 87, are a transit peptide targeting the mitochondrion; the sequence is MFSLRKTKLQ…REAISSISGS (87 aa). 11 PPR repeats span residues 257 to 291, 292 to 322, 330 to 364, 458 to 492, 495 to 529, 530 to 564, 565 to 599, 601 to 631, 637 to 671, 672 to 707, and 713 to 747; these read NTQV…GVKA, DANL…IDEA, FWQF…GKVA, TEEI…DSPV, DNSM…GVRT, GSSV…GIQL, DSSC…KILR, GNQK…IREV, GVHD…GHSP, NAQT…AAAT, and DQEL…NMFV.

It belongs to the PPR family. P subfamily.

The protein resides in the mitochondrion. The protein is Pentatricopeptide repeat-containing protein At1g03100, mitochondrial of Arabidopsis thaliana (Mouse-ear cress).